We begin with the raw amino-acid sequence, 399 residues long: A-type ATP synthase subunit C (399 aa).

This sequence belongs to the V-ATPase V0D/AC39 subunit family. As to quaternary structure, the A-type ATPase is composed of subunits A(3), B(3), C, D, E(1 or 2), F, H(2), I and K(x).

The protein resides in the cell membrane. Its function is as follows. Component of the A-type ATP synthase that produces ATP from ADP in the presence of a proton gradient across the membrane. This Methanocaldococcus jannaschii (strain ATCC 43067 / DSM 2661 / JAL-1 / JCM 10045 / NBRC 100440) (Methanococcus jannaschii) protein is A-type ATP synthase subunit C.